Here is a 451-residue protein sequence, read N- to C-terminus: UDP-glycosyltransferase 76C4 (451 aa).

Residues Ser-273, 332 to 334 (APQ), 349 to 357 (HNGWNSTVE), and 371 to 374 (RWDQ) each bind UDP-alpha-D-glucose.

This sequence belongs to the UDP-glycosyltransferase family.

The polypeptide is UDP-glycosyltransferase 76C4 (UGT76C4) (Arabidopsis thaliana (Mouse-ear cress)).